Reading from the N-terminus, the 208-residue chain is Methylthioribulose-1-phosphate dehydratase (208 aa).

Positions 96 and 98 each coordinate Zn(2+).

Belongs to the aldolase class II family. MtnB subfamily. The cofactor is Zn(2+).

The enzyme catalyses 5-(methylsulfanyl)-D-ribulose 1-phosphate = 5-methylsulfanyl-2,3-dioxopentyl phosphate + H2O. It participates in amino-acid biosynthesis; L-methionine biosynthesis via salvage pathway; L-methionine from S-methyl-5-thio-alpha-D-ribose 1-phosphate: step 2/6. Its function is as follows. Catalyzes the dehydration of methylthioribulose-1-phosphate (MTRu-1-P) into 2,3-diketo-5-methylthiopentyl-1-phosphate (DK-MTP-1-P). The chain is Methylthioribulose-1-phosphate dehydratase from Pseudomonas fluorescens (strain Pf0-1).